Reading from the N-terminus, the 274-residue chain is uncharacterized protein (274 aa).

104 to 111 (GVFAIGKS) is an ATP binding site.

This is an uncharacterized protein from Mycoplasma genitalium (strain ATCC 33530 / DSM 19775 / NCTC 10195 / G37) (Mycoplasmoides genitalium).